The following is a 341-amino-acid chain: MQDFVNRLWYPKADDCIGYRGIKWLLTPLSLLFWCVSSLRRLLFKLGIKAAVSLPVPVIVVGNITVGGSGKTPTVIYLIELLRAQGLNPGVVSRGYGVKIDGVKIVEPHLGADSVGDEPAMIVARTQVPMVIGSDRVSAAKCLIERFDVDIIISDDGLQHYKMARDVELLILDGERRFGNELLLPAGPLRELTGRQKTVDFTIVNGEAKEGEFQMILEPTRFIPVSPRSELVFEPVEHVVAIAGIGNPERFFTTLAQSGVEVIKTKAFEDHQKFSLTQITQVTGNSPVLMTEKDAVKCRDFAKENWWYLAVDAKLAENFDQRLMDKVRQVIAVKQGNRDVV.

65–72 (TVGGSGKT) contacts ATP.

The protein belongs to the LpxK family.

It carries out the reaction a lipid A disaccharide + ATP = a lipid IVA + ADP + H(+). Its pathway is glycolipid biosynthesis; lipid IV(A) biosynthesis; lipid IV(A) from (3R)-3-hydroxytetradecanoyl-[acyl-carrier-protein] and UDP-N-acetyl-alpha-D-glucosamine: step 6/6. Its function is as follows. Transfers the gamma-phosphate of ATP to the 4'-position of a tetraacyldisaccharide 1-phosphate intermediate (termed DS-1-P) to form tetraacyldisaccharide 1,4'-bis-phosphate (lipid IVA). This is Tetraacyldisaccharide 4'-kinase from Shewanella woodyi (strain ATCC 51908 / MS32).